We begin with the raw amino-acid sequence, 346 residues long: Cysteinyl leukotriene receptor 2 (346 aa).

Topologically, residues 1–42 are extracellular; it reads MERKFMSLQPSISVSEMEPNGTFSNNNSRNCTIENFKREFFP. 3 N-linked (GlcNAc...) asparagine glycosylation sites follow: Asn20, Asn26, and Asn30. Residues 43 to 63 form a helical membrane-spanning segment; the sequence is IVYLIIFFWGVLGNGLSIYVF. Over 64 to 72 the chain is Cytoplasmic; it reads LQPYKKSTS. Residues 73–93 traverse the membrane as a helical segment; that stretch reads VNVFMLNLAISDLLFISTLPF. Over 94-123 the chain is Extracellular; it reads RADYYLRGSNWIFGDLACRIMSYSLYVNMY. Cys111 and Cys187 are oxidised to a cystine. A helical transmembrane segment spans residues 124–144; it reads SSIYFLTVLSVVRFLAMVHPF. Over 145–153 the chain is Cytoplasmic; the sequence is RLLHVTSIR. A helical transmembrane segment spans residues 154 to 174; that stretch reads SAWILCGIIWILIMASSIMLL. Topologically, residues 175-204 are extracellular; that stretch reads DSGSEQNGSVTSCLELNLYKIAKLQTMNYI. Asn181 carries an N-linked (GlcNAc...) asparagine glycan. Residues 205–225 traverse the membrane as a helical segment; sequence ALVVGCLLPFFTLSICYLLII. Residues 226–245 are Cytoplasmic-facing; that stretch reads RVLLKVEVPESGLRVSHRKA. The helical transmembrane segment at 246-266 threads the bilayer; sequence LTTIIITLIIFFLCFLPYHTL. Topologically, residues 267-286 are extracellular; the sequence is RTVHLTTWKVGLCKDRLHKA. A helical membrane pass occupies residues 287–307; sequence LVITLALAAANACFNPLLYYF. Residues 308-346 lie on the Cytoplasmic side of the membrane; sequence AGENFKDRLKSALRKGHPQKAKTKCVFPVSVWLRKETRV.

The protein belongs to the G-protein coupled receptor 1 family. In terms of tissue distribution, widely expressed, with highest levels in the heart, placenta, spleen, peripheral blood leukocytes and adrenal gland. In lung, expressed in the interstitial macrophages, and slightly in smooth muscle cells.

It is found in the cell membrane. Receptor for cysteinyl leukotrienes. The response is mediated via a G-protein that activates a phosphatidylinositol-calcium second messenger system. Stimulation by BAY u9773, a partial agonist, induces specific contractions of pulmonary veins and might also have an indirect role in the relaxation of the pulmonary vascular endothelium. The rank order of affinities for the leukotrienes is LTC4 = LTD4 &gt;&gt; LTE4. The sequence is that of Cysteinyl leukotriene receptor 2 (CYSLTR2) from Homo sapiens (Human).